The sequence spans 147 residues: UPF0208 membrane protein SO_2914 (147 aa).

A run of 2 helical transmembrane segments spans residues 40–60 and 68–88; these read LAIL…LYTY and ALTI…WLGW.

The protein belongs to the UPF0208 family.

The protein resides in the cell inner membrane. This chain is UPF0208 membrane protein SO_2914, found in Shewanella oneidensis (strain ATCC 700550 / JCM 31522 / CIP 106686 / LMG 19005 / NCIMB 14063 / MR-1).